A 192-amino-acid polypeptide reads, in one-letter code: MPSLLLASSSSYRRELLTRLRLPFTCKSPDIDESHRLDETAHDLVRRLALEKARALAGEYPHHLIIGSDQVAVLNGQILGKPHTFERALEQLTAASGTSVTFLTGLALLNSSTGEHQVDCVPFTVHMRELDQASIERYLHAEQPYDCAGSFKAEGLGVSLFRSTEGSDATSLIGLPLIRLVDMLIKEGVSVP.

Asp-69 serves as the catalytic Proton acceptor.

It belongs to the Maf family. YceF subfamily. A divalent metal cation serves as cofactor.

It is found in the cytoplasm. The enzyme catalyses N(7)-methyl-GTP + H2O = N(7)-methyl-GMP + diphosphate + H(+). Functionally, nucleoside triphosphate pyrophosphatase that hydrolyzes 7-methyl-GTP (m(7)GTP). May have a dual role in cell division arrest and in preventing the incorporation of modified nucleotides into cellular nucleic acids. This is 7-methyl-GTP pyrophosphatase from Pseudomonas savastanoi pv. phaseolicola (strain 1448A / Race 6) (Pseudomonas syringae pv. phaseolicola (strain 1448A / Race 6)).